We begin with the raw amino-acid sequence, 326 residues long: Phospho-N-acetylmuramoyl-pentapeptide-transferase (326 aa).

9 helical membrane passes run 3 to 23 (ISISAGIVTFLLTLVGIPAFI), 51 to 71 (TMGGLVFLITSVLVAFFFALF), 79 to 99 (VGMILFILVLYGLVGFLDDFL), 115 to 135 (LALQLLGGVIFYLFYERGGDI), 138 to 158 (VFGYPVHLGFFYIFFALFWLV), 169 to 189 (GVDGLASISVVISLFAYGVIA), 195 to 215 (MDILLVILAMIGGLLGFFIFN), 221 to 243 (VFMGDVGSLALGGMLAAISMALH), and 306 to 326 (FFFWGVGLLASLLTLAILYLM).

Belongs to the glycosyltransferase 4 family. MraY subfamily. It depends on Mg(2+) as a cofactor.

The protein resides in the cell membrane. The catalysed reaction is UDP-N-acetyl-alpha-D-muramoyl-L-alanyl-gamma-D-glutamyl-L-lysyl-D-alanyl-D-alanine + di-trans,octa-cis-undecaprenyl phosphate = Mur2Ac(oyl-L-Ala-gamma-D-Glu-L-Lys-D-Ala-D-Ala)-di-trans,octa-cis-undecaprenyl diphosphate + UMP. It functions in the pathway cell wall biogenesis; peptidoglycan biosynthesis. Catalyzes the initial step of the lipid cycle reactions in the biosynthesis of the cell wall peptidoglycan: transfers peptidoglycan precursor phospho-MurNAc-pentapeptide from UDP-MurNAc-pentapeptide onto the lipid carrier undecaprenyl phosphate, yielding undecaprenyl-pyrophosphoryl-MurNAc-pentapeptide, known as lipid I. This Streptococcus pneumoniae serotype 2 (strain D39 / NCTC 7466) protein is Phospho-N-acetylmuramoyl-pentapeptide-transferase.